We begin with the raw amino-acid sequence, 158 residues long: Cyclic pyranopterin monophosphate synthase (158 aa).

Substrate contacts are provided by residues 74-76 (MCH) and 112-113 (ME). Residue aspartate 127 is part of the active site.

This sequence belongs to the MoaC family. As to quaternary structure, homohexamer; trimer of dimers.

The catalysed reaction is (8S)-3',8-cyclo-7,8-dihydroguanosine 5'-triphosphate = cyclic pyranopterin phosphate + diphosphate. Its pathway is cofactor biosynthesis; molybdopterin biosynthesis. Functionally, catalyzes the conversion of (8S)-3',8-cyclo-7,8-dihydroguanosine 5'-triphosphate to cyclic pyranopterin monophosphate (cPMP). The sequence is that of Cyclic pyranopterin monophosphate synthase from Helicobacter pylori (strain J99 / ATCC 700824) (Campylobacter pylori J99).